The primary structure comprises 133 residues: Egg protein CP422 (133 aa).

The first 21 residues, 1 to 21 (MHECMIVFFIFAVVSIYYADA), serve as a signal peptide directing secretion. 3 disulfides stabilise this stretch: C107-C121, C114-C125, and C120-C130.

It is found in the secreted. In Schistosoma japonicum (Blood fluke), this protein is Egg protein CP422 (CP422).